A 321-amino-acid chain; its full sequence is Putative ribose-phosphate pyrophosphokinase 2 (321 aa).

ATP contacts are provided by residues 41-43 (DGE) and 100-101 (RQ). His-134 lines the Mg(2+) pocket. D-ribose 5-phosphate-binding positions include Asp-223 and 227–231 (NTGVT).

This sequence belongs to the ribose-phosphate pyrophosphokinase family. Class I subfamily. Homohexamer. Mg(2+) serves as cofactor.

Its subcellular location is the cytoplasm. It carries out the reaction D-ribose 5-phosphate + ATP = 5-phospho-alpha-D-ribose 1-diphosphate + AMP + H(+). Its pathway is metabolic intermediate biosynthesis; 5-phospho-alpha-D-ribose 1-diphosphate biosynthesis; 5-phospho-alpha-D-ribose 1-diphosphate from D-ribose 5-phosphate (route I): step 1/1. In terms of biological role, involved in the biosynthesis of the central metabolite phospho-alpha-D-ribosyl-1-pyrophosphate (PRPP) via the transfer of pyrophosphoryl group from ATP to 1-hydroxyl of ribose-5-phosphate (Rib-5-P). This chain is Putative ribose-phosphate pyrophosphokinase 2, found in Lactococcus lactis subsp. lactis (strain IL1403) (Streptococcus lactis).